The chain runs to 102 residues: MANNKSSKKRVEIAERNRLQNKAYKSSMRTLMKRCFSACEAYNATPGDEAKTSVQASMNAAFSKIDKAVKRGVLHRNAGAHQKARLSVAVKKAIDPAPASAS.

The protein belongs to the bacterial ribosomal protein bS20 family.

Its function is as follows. Binds directly to 16S ribosomal RNA. This is Small ribosomal subunit protein bS20 from Synechococcus sp. (strain WH7803).